The sequence spans 289 residues: UPF0725 protein At1g27860 (289 aa).

The disordered stretch occupies residues 266–289 (DQQRSMTLPSGEQAESSKKRPRLS). The span at 268–279 (QRSMTLPSGEQA) shows a compositional bias: polar residues.

It belongs to the UPF0725 (EMB2204) family.

This Arabidopsis thaliana (Mouse-ear cress) protein is UPF0725 protein At1g27860.